We begin with the raw amino-acid sequence, 64 residues long: Large ribosomal subunit protein bL35 (64 aa).

Over residues 1–44 the composition is skewed to basic residues; it reads MSKIKSHSGAAKRFKRTANGFKHKQSHTSHILTKKSTKRKRHLR. The disordered stretch occupies residues 1 to 48; that stretch reads MSKIKSHSGAAKRFKRTANGFKHKQSHTSHILTKKSTKRKRHLRSMNQ.

This sequence belongs to the bacterial ribosomal protein bL35 family.

The sequence is that of Large ribosomal subunit protein bL35 from Marinomonas sp. (strain MWYL1).